Here is a 157-residue protein sequence, read N- to C-terminus: 3-dehydroquinate dehydratase (157 aa).

Tyrosine 22 acts as the Proton acceptor in catalysis. The substrate site is built by asparagine 73, histidine 79, and aspartate 86. Histidine 99 acts as the Proton donor in catalysis. Substrate-binding positions include 100–101 and arginine 110; that span reads LS.

It belongs to the type-II 3-dehydroquinase family. In terms of assembly, homododecamer.

The enzyme catalyses 3-dehydroquinate = 3-dehydroshikimate + H2O. It participates in metabolic intermediate biosynthesis; chorismate biosynthesis; chorismate from D-erythrose 4-phosphate and phosphoenolpyruvate: step 3/7. Its function is as follows. Catalyzes a trans-dehydration via an enolate intermediate. In Roseiflexus castenholzii (strain DSM 13941 / HLO8), this protein is 3-dehydroquinate dehydratase.